The following is a 385-amino-acid chain: Transcription factor TGAL3 (385 aa).

The disordered stretch occupies residues Leu62–Arg113. The segment covering Ser87 to Met96 has biased composition (basic and acidic residues). The 45-residue stretch at Asp93 to Arg137 folds into the bZIP domain. The basic motif stretch occupies residues Lys95–Lys115. A leucine-zipper region spans residues Leu121–Leu135. Positions Thr162–Arg382 constitute a DOG1 domain.

This sequence belongs to the bZIP family. Interacts with NPR1/NH1, NPR2/NH2 and NPR3/NH3.

Its subcellular location is the nucleus. Its function is as follows. Transcriptional regulator involved in defense response. The chain is Transcription factor TGAL3 from Oryza sativa subsp. japonica (Rice).